The sequence spans 206 residues: Small ribosomal subunit protein uS4 (206 aa).

The region spanning 98 to 161 is the S4 RNA-binding domain; it reads RRLDNVVYRL…RSMELIKNNL (64 aa).

The protein belongs to the universal ribosomal protein uS4 family. In terms of assembly, part of the 30S ribosomal subunit. Contacts protein S5. The interaction surface between S4 and S5 is involved in control of translational fidelity.

Its function is as follows. One of the primary rRNA binding proteins, it binds directly to 16S rRNA where it nucleates assembly of the body of the 30S subunit. In terms of biological role, with S5 and S12 plays an important role in translational accuracy. The sequence is that of Small ribosomal subunit protein uS4 from Caldanaerobacter subterraneus subsp. tengcongensis (strain DSM 15242 / JCM 11007 / NBRC 100824 / MB4) (Thermoanaerobacter tengcongensis).